Here is a 160-residue protein sequence, read N- to C-terminus: Nitrate reductase [NADH] (160 aa).

Thr-37 is a binding site for FAD.

The protein belongs to the nitrate reductase family. In terms of assembly, homodimer. FAD is required as a cofactor. Requires heme as cofactor. It depends on Mo-molybdopterin as a cofactor.

It catalyses the reaction nitrite + NAD(+) + H2O = nitrate + NADH + H(+). Nitrate reductase is a key enzyme involved in the first step of nitrate assimilation in plants, fungi and bacteria. This Lotus tetragonolobus (Winged pea) protein is Nitrate reductase [NADH] (NIA).